The sequence spans 73 residues: Translation initiation factor IF-1 (73 aa).

Positions 1-73 constitute an S1-like domain; that stretch reads MAKKDGVIEI…TRGRIVYRYK (73 aa).

This sequence belongs to the IF-1 family. As to quaternary structure, component of the 30S ribosomal translation pre-initiation complex which assembles on the 30S ribosome in the order IF-2 and IF-3, IF-1 and N-formylmethionyl-tRNA(fMet); mRNA recruitment can occur at any time during PIC assembly.

It is found in the cytoplasm. One of the essential components for the initiation of protein synthesis. Stabilizes the binding of IF-2 and IF-3 on the 30S subunit to which N-formylmethionyl-tRNA(fMet) subsequently binds. Helps modulate mRNA selection, yielding the 30S pre-initiation complex (PIC). Upon addition of the 50S ribosomal subunit IF-1, IF-2 and IF-3 are released leaving the mature 70S translation initiation complex. The polypeptide is Translation initiation factor IF-1 (Leifsonia xyli subsp. xyli (strain CTCB07)).